Consider the following 192-residue polypeptide: Acireductone dioxygenase 2 (192 aa).

Fe(2+)-binding residues include His-99, His-101, Glu-105, and His-144. Ni(2+)-binding residues include His-99, His-101, Glu-105, and His-144.

The protein belongs to the acireductone dioxygenase (ARD) family. Fe(2+) serves as cofactor. Ni(2+) is required as a cofactor.

It is found in the cytoplasm. The protein resides in the nucleus. It catalyses the reaction 1,2-dihydroxy-5-(methylsulfanyl)pent-1-en-3-one + O2 = 4-methylsulfanyl-2-oxobutanoate + formate + 2 H(+). It carries out the reaction 1,2-dihydroxy-5-(methylsulfanyl)pent-1-en-3-one + O2 = 3-(methylsulfanyl)propanoate + CO + formate + 2 H(+). Its pathway is amino-acid biosynthesis; L-methionine biosynthesis via salvage pathway; L-methionine from S-methyl-5-thio-alpha-D-ribose 1-phosphate: step 5/6. In terms of biological role, catalyzes 2 different reactions between oxygen and the acireductone 1,2-dihydroxy-3-keto-5-methylthiopentene (DHK-MTPene) depending upon the metal bound in the active site. Fe-containing acireductone dioxygenase (Fe-ARD) produces formate and 2-keto-4-methylthiobutyrate (KMTB), the alpha-ketoacid precursor of methionine in the methionine recycle pathway. Ni-containing acireductone dioxygenase (Ni-ARD) produces methylthiopropionate, carbon monoxide and formate, and does not lie on the methionine recycle pathway. The chain is Acireductone dioxygenase 2 (ARD2) from Arabidopsis thaliana (Mouse-ear cress).